The chain runs to 491 residues: Anhydromuropeptide permease (491 aa).

Topologically, residues 1–11 (MSSQYLRIFQQ) are cytoplasmic. A helical membrane pass occupies residues 12–32 (PRSAILLILGFASGLPLALTS). The Periplasmic segment spans residues 33–47 (GTLQAWMTVENIDLK). The chain crosses the membrane as a helical span at residues 48-61 (TIGFFSLVGQAYVF). Residues 62 to 81 (KFLWSPLMDRYTPPFFGRRR) lie on the Cytoplasmic side of the membrane. Residues 82–105 (GWLLATQILLLVAIAAMGFLEPGT) form a helical membrane-spanning segment. A topological domain (periplasmic) is located at residue Gln-106. The chain crosses the membrane as a helical span at residues 107–124 (LRWMAALAVVIAFCSASQ). At 125-221 (DIVFDAWKTD…VAPLRDFFGR (97 aa)) the chain is on the cytoplasmic side. Residues 222–240 (NNAWLILLLIVLYKLGDAF) traverse the membrane as a helical segment. Topologically, residues 241-264 (AMSLTTTFLIRGVGFDAGEVGVVN) are periplasmic. Residues 265 to 284 (KTLGLLATIVGALYGGILMQ) traverse the membrane as a helical segment. Topologically, residues 285–287 (RLS) are cytoplasmic. Residues 288–303 (LFRALLIFGILQGASN) traverse the membrane as a helical segment. Topologically, residues 304-327 (AGYWLLSITDKHLYSMGAAVFFEN) are periplasmic. Residues 328–346 (LCGGMGTSAFVALLMTLCN) form a helical membrane-spanning segment. The Cytoplasmic segment spans residues 347–421 (KSFSATQFAL…NDNFISRTAY (75 aa)). A helical membrane pass occupies residues 422–453 (PAGYAFAMWTLAAGVSLLAVWLLLLTMDALDL). At 454–457 (THFS) the chain is on the periplasmic side. Residues 458-485 (FLPALLEVGVLVALSGVVLGGLLDYLAL) form a helical membrane-spanning segment. The Cytoplasmic portion of the chain corresponds to 486 to 491 (RKTHLT).

It belongs to the major facilitator superfamily.

The protein localises to the cell inner membrane. In terms of biological role, permease involved in cell wall peptidoglycan recycling. Transports, from the periplasm into the cytoplasm, the disaccharide N-acetylglucosaminyl-beta-1,4-anhydro-N-acetylmuramic acid (GlcNAc-anhMurNAc) and GlcNAc-anhMurNAc-peptides. Transport is dependent on the proton motive force. In Escherichia coli O157:H7, this protein is Anhydromuropeptide permease (ampG).